Consider the following 490-residue polypeptide: Type I restriction enzyme EcoEI methylase subunit (490 aa).

Residues glutamate 163–arginine 168, threonine 193–glycine 195, and glutamate 226 contribute to the S-adenosyl-L-methionine site.

The protein belongs to the N(4)/N(6)-methyltransferase family. As to quaternary structure, the type I restriction/modification system is composed of three polypeptides R, M and S; the restriction enzyme has stoichiometry R(2)M(2)S(1) while the methyltransferase is M(2)S(1).

It catalyses the reaction a 2'-deoxyadenosine in DNA + S-adenosyl-L-methionine = an N(6)-methyl-2'-deoxyadenosine in DNA + S-adenosyl-L-homocysteine + H(+). Functionally, the subtype gamma methyltransferase (M) subunit of a type I restriction enzyme. The M and S subunits together form a methyltransferase (MTase) that methylates two adenine residues of the sequence 5'-GAGN(7)ATGC-3'. In the presence of the R subunit the complex can also act as an endonuclease, binding to the same target sequence but cutting the DNA some distance from this site. Whether the DNA is cut or modified depends on the methylation state of the target sequence. When the target site is unmodified, the DNA is cut. When the target site is hemimethylated, the complex acts as a maintenance MTase modifying the DNA so that both strands become methylated. After locating a non-methylated recognition site, the enzyme complex serves as a molecular motor that translocates DNA in an ATP-dependent manner until a collision occurs that triggers cleavage. The protein is Type I restriction enzyme EcoEI methylase subunit (hsdM) of Escherichia coli.